The primary structure comprises 211 residues: Large ribosomal subunit protein uL4 (211 aa).

Residues 41–87 (QAHARQGTASTLTRSEVRGGGRKPYKQKGTGRARQGSIRTPLRPGGG) form a disordered region. Positions 60–71 (GGRKPYKQKGTG) are enriched in basic residues.

Belongs to the universal ribosomal protein uL4 family. Part of the 50S ribosomal subunit.

Its function is as follows. One of the primary rRNA binding proteins, this protein initially binds near the 5'-end of the 23S rRNA. It is important during the early stages of 50S assembly. It makes multiple contacts with different domains of the 23S rRNA in the assembled 50S subunit and ribosome. Forms part of the polypeptide exit tunnel. In Parasynechococcus marenigrum (strain WH8102), this protein is Large ribosomal subunit protein uL4.